Here is a 61-residue protein sequence, read N- to C-terminus: Photosystem II reaction center protein K (61 aa).

The propeptide occupies 1 to 24 (MLNIFSLISICLNSALYSSSFFFG). The helical transmembrane segment at 40–60 (MPVIPVFFFLLAFVWQAAVSF) threads the bilayer.

Belongs to the PsbK family. In terms of assembly, PSII is composed of 1 copy each of membrane proteins PsbA, PsbB, PsbC, PsbD, PsbE, PsbF, PsbH, PsbI, PsbJ, PsbK, PsbL, PsbM, PsbT, PsbX, PsbY, PsbZ, Psb30/Ycf12, at least 3 peripheral proteins of the oxygen-evolving complex and a large number of cofactors. It forms dimeric complexes.

Its subcellular location is the plastid. It localises to the chloroplast thylakoid membrane. One of the components of the core complex of photosystem II (PSII). PSII is a light-driven water:plastoquinone oxidoreductase that uses light energy to abstract electrons from H(2)O, generating O(2) and a proton gradient subsequently used for ATP formation. It consists of a core antenna complex that captures photons, and an electron transfer chain that converts photonic excitation into a charge separation. In Jasminum nudiflorum (Winter jasmine), this protein is Photosystem II reaction center protein K.